Reading from the N-terminus, the 308-residue chain is Probable dimethyladenosine transferase (308 aa).

Residues 1–11 (MGKTSKVKKTK) show a composition bias toward basic residues. A disordered region spans residues 1-24 (MGKTSKVKKTKAGSSTGNVQSLPF). Polar residues predominate over residues 12-24 (AGSSTGNVQSLPF). The S-adenosyl-L-methionine site is built by H31, L33, G58, E79, D107, and N122.

This sequence belongs to the class I-like SAM-binding methyltransferase superfamily. rRNA adenine N(6)-methyltransferase family. As to quaternary structure, part of the small subunit (SSU) processome, composed of more than 70 proteins and the RNA chaperone small nucleolar RNA (snoRNA) U3.

It localises to the nucleus. The protein resides in the nucleolus. It carries out the reaction adenosine(1779)/adenosine(1780) in 18S rRNA + 4 S-adenosyl-L-methionine = N(6)-dimethyladenosine(1779)/N(6)-dimethyladenosine(1780) in 18S rRNA + 4 S-adenosyl-L-homocysteine + 4 H(+). In terms of biological role, specifically dimethylates two adjacent adenosines in the loop of a conserved hairpin near the 3'-end of 18S rRNA in the 40S particle. Involved in the pre-rRNA processing steps leading to small-subunit rRNA production independently of its RNA-modifying catalytic activity. Part of the small subunit (SSU) processome, first precursor of the small eukaryotic ribosomal subunit. During the assembly of the SSU processome in the nucleolus, many ribosome biogenesis factors, an RNA chaperone and ribosomal proteins associate with the nascent pre-rRNA and work in concert to generate RNA folding, modifications, rearrangements and cleavage as well as targeted degradation of pre-ribosomal RNA by the RNA exosome. The protein is Probable dimethyladenosine transferase of Caenorhabditis elegans.